Consider the following 718-residue polypeptide: Probable trehalose-phosphatase (718 aa).

The tract at residues 449 to 470 is disordered; it reads LSMDQTGHKKVDAKKKPGIRKK. Over residues 459-470 the composition is skewed to basic residues; that stretch reads VDAKKKPGIRKK.

In the N-terminal section; belongs to the glycosyltransferase 20 family. It in the C-terminal section; belongs to the trehalose phosphatase family.

The enzyme catalyses alpha,alpha-trehalose 6-phosphate + H2O = alpha,alpha-trehalose + phosphate. This Encephalitozoon cuniculi (strain GB-M1) (Microsporidian parasite) protein is Probable trehalose-phosphatase.